The following is a 96-amino-acid chain: Nucleoid-associated protein DR_0199 (96 aa).

It belongs to the YbaB/EbfC family. Homodimer.

The protein resides in the cytoplasm. Its subcellular location is the nucleoid. Its function is as follows. Binds to DNA and alters its conformation. May be involved in regulation of gene expression, nucleoid organization and DNA protection. This is Nucleoid-associated protein DR_0199 from Deinococcus radiodurans (strain ATCC 13939 / DSM 20539 / JCM 16871 / CCUG 27074 / LMG 4051 / NBRC 15346 / NCIMB 9279 / VKM B-1422 / R1).